Consider the following 436-residue polypeptide: MGQVLPLVTRQGDRIAIVSGLRTPFARQATAFHGIPAVDLGKMVVGELLARSEIPAEVIEQLVFGQVVQMPEAPNIAREIVLGTGMNVHTDAYSVSRACATSFQAVANVVESLMAGTIRAGIAGGADSSSVLPIGVSKKLARVLVDVNKARTMSQRLKLFSRLRLRDLMPVPPAVAEYSTGLRMGDTAEQMAKTYGITREQQDALAHRSHQRAAQAWSDGKLKEEVMTAFIPPYKQLLAEDNNIRGNSSLADFAKLRPAFDRKHGTVTAANSTPLTDGAAAVILMTESRAKELGLVPLGYLRSYAFTAIDVWQDMLLGPAWSTPLALERAGLTMADLTLIDMHEAFAAQTLANIQLLGSERFAREALGRAHATGEVDDSKFNVLGGSIAYGHPFAATGARMITQTLHELRRRGGGFGLVTACAAGGLGAAMVLEAE.

Cysteine 99 functions as the Acyl-thioester intermediate in the catalytic mechanism. Active-site proton acceptor residues include histidine 392 and cysteine 422.

The protein belongs to the thiolase-like superfamily. Thiolase family. Heterotetramer of two alpha chains (FadJ) and two beta chains (FadI).

The protein resides in the cytoplasm. It catalyses the reaction an acyl-CoA + acetyl-CoA = a 3-oxoacyl-CoA + CoA. Its pathway is lipid metabolism; fatty acid beta-oxidation. Catalyzes the final step of fatty acid oxidation in which acetyl-CoA is released and the CoA ester of a fatty acid two carbons shorter is formed. This Escherichia coli O157:H7 protein is 3-ketoacyl-CoA thiolase.